Consider the following 432-residue polypeptide: Protein RETICULATA, chloroplastic (432 aa).

The transit peptide at 1-47 directs the protein to the chloroplast; that stretch reads MAGCAMNLQFSSVVKVRNEISSFGICNRDFVFRDLAKAMKVPVLRIR. Residues 109 to 140 are disordered; it reads GNVGDGFNGSDGNGGGGGGGNGGEGDGEGEDY. The span at 111–132 shows a compositional bias: gly residues; it reads VGDGFNGSDGNGGGGGGGNGGE. The next 2 helical transmembrane spans lie at 249–269 and 322–342; these read LYVA…GMLA and IMYG…ANLI.

Belongs to the RETICULATA family. In terms of tissue distribution, highly expressed in the vasculature of developing leaf primordia, margins of fully expanded leaves, hydathodes of rosette of cauline leaves, basal region of the lamina, stipules, root tips, stamens and in the abscission zone of the funiculus.

The protein resides in the plastid. The protein localises to the chloroplast membrane. May play a role in leaf development. Required for leaf mesophyll cell division in the early stages of leaf organogenesis. Acts in a developmental pathway that involves PPT1/CUE1 but does not include ASE2/DOV1. This chain is Protein RETICULATA, chloroplastic, found in Arabidopsis thaliana (Mouse-ear cress).